The chain runs to 757 residues: LPS-assembly protein LptD (757 aa).

Residues 1–20 form the signal peptide; it reads MLQRFITSLMLLPFPGSALA.

Belongs to the LptD family. As to quaternary structure, component of the lipopolysaccharide transport and assembly complex. Interacts with LptE and LptA.

It is found in the cell outer membrane. In terms of biological role, together with LptE, is involved in the assembly of lipopolysaccharide (LPS) at the surface of the outer membrane. This chain is LPS-assembly protein LptD, found in Idiomarina loihiensis (strain ATCC BAA-735 / DSM 15497 / L2-TR).